Consider the following 388-residue polypeptide: Phosphoglycerate kinase (388 aa).

Residues aspartate 21–asparagine 23, arginine 36, histidine 59–arginine 62, arginine 114, and arginine 147 each bind substrate. Residues lysine 198, glutamate 315, and glycine 341–threonine 344 each bind ATP.

It belongs to the phosphoglycerate kinase family. Monomer.

Its subcellular location is the cytoplasm. The enzyme catalyses (2R)-3-phosphoglycerate + ATP = (2R)-3-phospho-glyceroyl phosphate + ADP. The protein operates within carbohydrate degradation; glycolysis; pyruvate from D-glyceraldehyde 3-phosphate: step 2/5. This chain is Phosphoglycerate kinase, found in Hahella chejuensis (strain KCTC 2396).